The primary structure comprises 102 residues: RNA-binding protein Hfq (102 aa).

The Sm domain maps to 9–68; sequence DPFLNALRRERVPVSIYLVNGIKLQGQIESFDQFVILLKNTVSQMVYKHAISTVVPSRPV. The disordered stretch occupies residues 63-102; it reads VPSRPVSHHSNNAGGGSNNYHHSNNAQPSSAASQDSEDAE. Over residues 70-96 the composition is skewed to low complexity; it reads HHSNNAGGGSNNYHHSNNAQPSSAASQ.

This sequence belongs to the Hfq family. In terms of assembly, homohexamer.

Functionally, RNA chaperone that binds small regulatory RNA (sRNAs) and mRNAs to facilitate mRNA translational regulation in response to envelope stress, environmental stress and changes in metabolite concentrations. Also binds with high specificity to tRNAs. This is RNA-binding protein Hfq from Cronobacter sakazakii (strain ATCC BAA-894) (Enterobacter sakazakii).